Reading from the N-terminus, the 715-residue chain is Transcription factor MST12 (715 aa).

Low complexity predominate over residues 214–224 (SSSFNAQQVSF). 3 disordered regions span residues 214 to 243 (SSSF…MPPP), 439 to 469 (AAHR…NSPP), and 518 to 539 (PMPS…AQGG). 2 C2H2-type zinc fingers span residues 564 to 588 (HSCP…VRTH) and 594 to 616 (YICP…KRTH). Residues 632 to 691 (EEEYSGDDHLGSLEEASPTSEGGYVTSSLNSAMAHSNTSQHPGSNAVSPNPGPMSHAPTY) form a disordered region. Polar residues predominate over residues 648 to 679 (SPTSEGGYVTSSLNSAMAHSNTSQHPGSNAVS).

The protein belongs to the STE12 transcription factor family.

It is found in the nucleus. Transcription factor that may function downstream of PMK1 to regulate genes involved in infectious hyphae growth. Is not essential for vegetative growth, conidiation or appressorium formation. May be involved in the regulation of the expression of the cell surface sensor MSB2. In Pyricularia oryzae (strain 70-15 / ATCC MYA-4617 / FGSC 8958) (Rice blast fungus), this protein is Transcription factor MST12.